A 641-amino-acid polypeptide reads, in one-letter code: Threonine--tRNA ligase (641 aa).

The TGS domain occupies 1–61; it reads MIKISFFDNQ…KKNGNLEILT (61 aa). The tract at residues 240–538 is catalytic; the sequence is DHKKINKELD…LVEETKGVFP (299 aa). Positions 334, 385, and 515 each coordinate Zn(2+).

It belongs to the class-II aminoacyl-tRNA synthetase family. As to quaternary structure, homodimer. It depends on Zn(2+) as a cofactor.

It localises to the cytoplasm. It carries out the reaction tRNA(Thr) + L-threonine + ATP = L-threonyl-tRNA(Thr) + AMP + diphosphate + H(+). Its function is as follows. Catalyzes the attachment of threonine to tRNA(Thr) in a two-step reaction: L-threonine is first activated by ATP to form Thr-AMP and then transferred to the acceptor end of tRNA(Thr). Also edits incorrectly charged L-seryl-tRNA(Thr). This is Threonine--tRNA ligase from Aster yellows witches'-broom phytoplasma (strain AYWB).